The following is a 260-amino-acid chain: Diphthine synthase (260 aa).

Residues leucine 9, aspartate 85, isoleucine 88, 113–114 (TA), leucine 168, alanine 208, and histidine 233 contribute to the S-adenosyl-L-methionine site.

This sequence belongs to the diphthine synthase family. Homodimer.

The enzyme catalyses 2-[(3S)-amino-3-carboxypropyl]-L-histidyl-[translation elongation factor 2] + 3 S-adenosyl-L-methionine = diphthine-[translation elongation factor 2] + 3 S-adenosyl-L-homocysteine + 3 H(+). The protein operates within protein modification; peptidyl-diphthamide biosynthesis. In terms of biological role, S-adenosyl-L-methionine-dependent methyltransferase that catalyzes the trimethylation of the amino group of the modified target histidine residue in translation elongation factor 2 (EF-2), to form an intermediate called diphthine. The three successive methylation reactions represent the second step of diphthamide biosynthesis. The protein is Diphthine synthase of Halobacterium salinarum (strain ATCC 29341 / DSM 671 / R1).